We begin with the raw amino-acid sequence, 79 residues long: Acyl carrier protein (79 aa).

Positions 4-79 (EQILVDVQEA…DVVAYIETKL (76 aa)) constitute a Carrier domain. S39 carries the O-(pantetheine 4'-phosphoryl)serine modification.

This sequence belongs to the acyl carrier protein (ACP) family. 4'-phosphopantetheine is transferred from CoA to a specific serine of apo-ACP by AcpS. This modification is essential for activity because fatty acids are bound in thioester linkage to the sulfhydryl of the prosthetic group.

Its subcellular location is the cytoplasm. Its pathway is lipid metabolism; fatty acid biosynthesis. In terms of biological role, carrier of the growing fatty acid chain in fatty acid biosynthesis. In Exiguobacterium sp. (strain ATCC BAA-1283 / AT1b), this protein is Acyl carrier protein.